The chain runs to 204 residues: Pyridoxal 5'-phosphate synthase subunit PdxT (204 aa).

52–54 (GES) contributes to the L-glutamine binding site. C84 (nucleophile) is an active-site residue. Residues R116 and 143 to 144 (IR) each bind L-glutamine. Catalysis depends on charge relay system residues H184 and E186.

This sequence belongs to the glutaminase PdxT/SNO family. As to quaternary structure, in the presence of PdxS, forms a dodecamer of heterodimers. Only shows activity in the heterodimer.

It carries out the reaction aldehydo-D-ribose 5-phosphate + D-glyceraldehyde 3-phosphate + L-glutamine = pyridoxal 5'-phosphate + L-glutamate + phosphate + 3 H2O + H(+). The catalysed reaction is L-glutamine + H2O = L-glutamate + NH4(+). It functions in the pathway cofactor biosynthesis; pyridoxal 5'-phosphate biosynthesis. In terms of biological role, catalyzes the hydrolysis of glutamine to glutamate and ammonia as part of the biosynthesis of pyridoxal 5'-phosphate. The resulting ammonia molecule is channeled to the active site of PdxS. The chain is Pyridoxal 5'-phosphate synthase subunit PdxT from Pyrobaculum arsenaticum (strain DSM 13514 / JCM 11321 / PZ6).